A 1116-amino-acid polypeptide reads, in one-letter code: Probable chitinase LysM11 (1116 aa).

One can recognise a LysM domain in the interval 233-283 (GTYTIQTNDNCAEIAAHFGVTQDDIYDLNEDTWGWAGCGTNDLKADQVICL). Residues 346 to 719 (FYHVAYFEVF…LGVDPDSDEA (374 aa)) enclose the GH18 domain. Glu466 serves as the catalytic Proton donor. Chitin contacts are provided by Tyr467 and Trp701.

Belongs to the glycosyl hydrolase 18 family. Chitinase class V subfamily.

It carries out the reaction Random endo-hydrolysis of N-acetyl-beta-D-glucosaminide (1-&gt;4)-beta-linkages in chitin and chitodextrins.. In terms of biological role, probable chitinase involved in the degradation of chitin, a component of the cell walls of fungi and exoskeletal elements of some animals (including worms and arthropods). Might be involved in manipulation of host defenses for successful infection. This is Probable chitinase LysM11 from Penicillium expansum (Blue mold rot fungus).